The primary structure comprises 147 residues: DNA-directed RNA polymerase I subunit rpa14 (147 aa).

Positions 71–147 (VQGPPTEELI…TQGVGEKEQS (77 aa)) are disordered. Low complexity predominate over residues 74–84 (PPTEELIIPPE). Over residues 87 to 111 (LETKEEESLKHAREENDDLHLDKET) the composition is skewed to basic and acidic residues. Residues 112-124 (KKRLKKEKKKAAR) show a composition bias toward basic residues. The segment covering 125 to 135 (REKEEARKAKA) has biased composition (basic and acidic residues).

In terms of assembly, component of the RNA polymerase I (Pol I) complex consisting of 14 subunits. Part of a Pol I subcomplex consisting of the subunits A14 and A43. Interacts with rpa43. Phosphorylated.

It is found in the nucleus. The protein localises to the nucleolus. In terms of biological role, DNA-dependent RNA polymerase catalyzes the transcription of DNA into RNA using the four ribonucleoside triphosphates as substrates. Component of RNA polymerase I which synthesizes ribosomal RNA precursors. A14 seems to play a role in the stability of Pol I subunit A43 and association of rrn3 to Pol I. The sequence is that of DNA-directed RNA polymerase I subunit rpa14 (ker1) from Schizosaccharomyces pombe (strain 972 / ATCC 24843) (Fission yeast).